The following is a 308-amino-acid chain: Methionine synthase (308 aa).

Residues histidine 192, cysteine 194, glutamate 215, and cysteine 282 each contribute to the Zn(2+) site.

It belongs to the archaeal MetE family. It depends on Zn(2+) as a cofactor.

It functions in the pathway amino-acid biosynthesis; L-methionine biosynthesis via de novo pathway. Catalyzes the transfer of a methyl group to L-homocysteine resulting in methionine formation. Can use methylcobalamin and methylcobinamide as methyl donors, but methylcobalamin is not considered to be the physiological substrate. This chain is Methionine synthase, found in Methanocaldococcus jannaschii (strain ATCC 43067 / DSM 2661 / JAL-1 / JCM 10045 / NBRC 100440) (Methanococcus jannaschii).